A 427-amino-acid polypeptide reads, in one-letter code: Glutamate-1-semialdehyde 2,1-aminomutase (427 aa).

Lysine 265 is subject to N6-(pyridoxal phosphate)lysine.

It belongs to the class-III pyridoxal-phosphate-dependent aminotransferase family. HemL subfamily. Homodimer. The cofactor is pyridoxal 5'-phosphate.

It localises to the cytoplasm. The enzyme catalyses (S)-4-amino-5-oxopentanoate = 5-aminolevulinate. It functions in the pathway porphyrin-containing compound metabolism; protoporphyrin-IX biosynthesis; 5-aminolevulinate from L-glutamyl-tRNA(Glu): step 2/2. The sequence is that of Glutamate-1-semialdehyde 2,1-aminomutase from Paraburkholderia phytofirmans (strain DSM 17436 / LMG 22146 / PsJN) (Burkholderia phytofirmans).